A 107-amino-acid chain; its full sequence is FK506-binding protein 1 (107 aa).

One can recognise a PPIase FKBP-type domain in the interval glycine 19 to lysine 107.

Belongs to the FKBP-type PPIase family.

The catalysed reaction is [protein]-peptidylproline (omega=180) = [protein]-peptidylproline (omega=0). Its activity is regulated as follows. Inhibited by both FK506 and rapamycin. PPIases accelerate the folding of proteins by catalyzing the cis-trans isomerization of proline imidic peptide bonds in oligopeptides. In Dictyostelium discoideum (Social amoeba), this protein is FK506-binding protein 1 (fkbp1).